The sequence spans 211 residues: Transcriptional regulatory protein RcsA (211 aa).

The HTH luxR-type domain maps to Ser-135 to Asp-200. Residues Thr-159–Gly-178 constitute a DNA-binding region (H-T-H motif).

The protein belongs to the RcsA family.

Its function is as follows. Component of the Rcs signaling system, which controls transcription of numerous genes. Binds to DNA to regulate expression of genes. The protein is Transcriptional regulatory protein RcsA of Erwinia amylovora (Fire blight bacteria).